The chain runs to 314 residues: Fibrinogen-like protein 1 (314 aa).

The signal sequence occupies residues 1–22; the sequence is MGEIRSFVLITVALILGKESWV. Residues 28–62 are a coiled coil; that stretch reads CLQEQVRLRAQVRQLETRVKQQQVVIAQLLHEKEV. One can recognise a Fibrinogen C-terminal domain in the interval 76–308; the sequence is LGGKRHYADC…SVVMKIRPSD (233 aa). 2 cysteine pairs are disulfide-bonded: Cys85–Cys114 and Cys250–Cys263.

Homodimer. Interacts (via the Fibrinogen C-terminal domain) with LAG3 (via Ig-like domains 1 and 2).

It localises to the secreted. Immune suppressive molecule that inhibits antigen-specific T-cell activation by acting as a major ligand of LAG3. Responsible for LAG3 T-cell inhibitory function. Binds LAG3 independently from MHC class II (MHC-II). Secreted by, and promotes growth of, hepatocytes. The sequence is that of Fibrinogen-like protein 1 from Rattus norvegicus (Rat).